A 201-amino-acid polypeptide reads, in one-letter code: Small ribosomal subunit protein uS4c (201 aa).

Positions glycine 20 to glutamine 43 are disordered. Residues aspartate 31–isoleucine 41 show a composition bias toward polar residues. An S4 RNA-binding domain is found at methionine 89–lysine 157.

The protein belongs to the universal ribosomal protein uS4 family. In terms of assembly, part of the 30S ribosomal subunit. Contacts protein S5. The interaction surface between S4 and S5 is involved in control of translational fidelity.

It is found in the plastid. The protein resides in the chloroplast. In terms of biological role, one of the primary rRNA binding proteins, it binds directly to 16S rRNA where it nucleates assembly of the body of the 30S subunit. With S5 and S12 plays an important role in translational accuracy. This Cycas taitungensis (Prince sago) protein is Small ribosomal subunit protein uS4c (rps4).